The primary structure comprises 278 residues: Large ribosomal subunit protein uL2 (278 aa).

Residues 210-219 (RKRWLGKRPQ) show a composition bias toward basic residues. A disordered region spans residues 210–278 (RKRWLGKRPQ…LIIRHRKGSK (69 aa)). Residues 258 to 270 (KTRDVKKASEKLI) are compositionally biased toward basic and acidic residues.

This sequence belongs to the universal ribosomal protein uL2 family. In terms of assembly, part of the 50S ribosomal subunit. Forms a bridge to the 30S subunit in the 70S ribosome.

One of the primary rRNA binding proteins. Required for association of the 30S and 50S subunits to form the 70S ribosome, for tRNA binding and peptide bond formation. It has been suggested to have peptidyltransferase activity; this is somewhat controversial. Makes several contacts with the 16S rRNA in the 70S ribosome. The chain is Large ribosomal subunit protein uL2 from Lactobacillus acidophilus (strain ATCC 700396 / NCK56 / N2 / NCFM).